The following is a 148-amino-acid chain: Large ribosomal subunit protein uL15 (148 aa).

A disordered region spans residues 1–61 (MELNNLKPAI…GGQMPMQRRL (61 aa)). Residues 30-39 (TATKGHKGQK) show a composition bias toward basic residues.

Belongs to the universal ribosomal protein uL15 family. As to quaternary structure, part of the 50S ribosomal subunit.

Its function is as follows. Binds to the 23S rRNA. This is Large ribosomal subunit protein uL15 from Geobacter metallireducens (strain ATCC 53774 / DSM 7210 / GS-15).